The primary structure comprises 135 residues: ATP synthase epsilon chain (135 aa).

This sequence belongs to the ATPase epsilon chain family. As to quaternary structure, F-type ATPases have 2 components, CF(1) - the catalytic core - and CF(0) - the membrane proton channel. CF(1) has five subunits: alpha(3), beta(3), gamma(1), delta(1), epsilon(1). CF(0) has three main subunits: a, b and c.

The protein localises to the cell inner membrane. In terms of biological role, produces ATP from ADP in the presence of a proton gradient across the membrane. In Chelativorans sp. (strain BNC1), this protein is ATP synthase epsilon chain.